Reading from the N-terminus, the 258-residue chain is MSDTQEYSIKPFDANLINPREDNFNTVGGSKIVVIGKAGTGKSTLIRYLLFLKRSIIPVGMVVSGTEDSNCFYSDIFPPLFIHDEYDEEIIKKFIKRQKYANEHISENPWAVLLLDDCTEDKKIFSSKWQQSLFKNGRHWKLLYILSLQHATDIPPAIRTNVDGVFIFRETNENNLKNIYLNYAGVIPKFEIFKAYMTQVTGDYTALYIDNSAQDNGEWYEHVYYWKVPQMDTRDMKFGCHEYIEFGKQRYNEKYSKN.

Gly-36–Ser-43 is an ATP binding site.

The protein belongs to the IIV-6 075L family.

This is an uncharacterized protein from Acheta domesticus (House cricket).